A 488-amino-acid chain; its full sequence is Probable cytochrome P450 6u1 (488 aa).

Cys430 contributes to the heme binding site.

It belongs to the cytochrome P450 family. Heme serves as cofactor.

The protein localises to the endoplasmic reticulum membrane. Its subcellular location is the microsome membrane. Its function is as follows. May be involved in the metabolism of insect hormones and in the breakdown of synthetic insecticides. This Drosophila melanogaster (Fruit fly) protein is Probable cytochrome P450 6u1 (Cyp6u1).